Here is a 211-residue protein sequence, read N- to C-terminus: Glycerol-3-phosphate acyltransferase (211 aa).

Transmembrane regions (helical) follow at residues 10–30 (FYTW…FGLL), 63–83 (TLTL…IKFL), 90–110 (SIII…PIWL), 126–146 (LGYY…FFIL), 152–172 (LSAL…YPHL), and 174–194 (AHCI…ANIA).

The protein belongs to the PlsY family. Probably interacts with PlsX.

It is found in the cell inner membrane. The catalysed reaction is an acyl phosphate + sn-glycerol 3-phosphate = a 1-acyl-sn-glycero-3-phosphate + phosphate. It functions in the pathway lipid metabolism; phospholipid metabolism. In terms of biological role, catalyzes the transfer of an acyl group from acyl-phosphate (acyl-PO(4)) to glycerol-3-phosphate (G3P) to form lysophosphatidic acid (LPA). This enzyme utilizes acyl-phosphate as fatty acyl donor, but not acyl-CoA or acyl-ACP. This chain is Glycerol-3-phosphate acyltransferase, found in Bartonella quintana (strain Toulouse) (Rochalimaea quintana).